We begin with the raw amino-acid sequence, 329 residues long: Sialic acid-binding periplasmic protein SiaP (329 aa).

A signal peptide spans 1–23; it reads MMKLTKLFLATAISLGVSSAVLA. Asparagine 33, aspartate 72, glutamate 90, arginine 150, arginine 170, and asparagine 210 together coordinate N-acetyl-beta-neuraminate.

This sequence belongs to the bacterial solute-binding protein 7 family. As to quaternary structure, the complex comprises the extracytoplasmic solute receptor protein SiaP, and the fused transmembrane protein SiaT.

The protein resides in the periplasm. Part of the tripartite ATP-independent periplasmic (TRAP) transport system SiaPT involved in the uptake of sialic acid (N-acetyl-beta-neuraminate). This protein specifically binds sialic acid with high affinity. N-Acetylneuraminate (sialic acid) can then be incorporated into the lipooligosaccharides (LOS) as a terminal non-reducing sugar, protecting the bacterium from complement-mediated killing by normal human serum. This Haemophilus influenzae (strain ATCC 51907 / DSM 11121 / KW20 / Rd) protein is Sialic acid-binding periplasmic protein SiaP (siaP).